Reading from the N-terminus, the 332-residue chain is tRNA dimethylallyltransferase (332 aa).

Position 17 to 24 (17 to 24 (GPTCSGKS)) interacts with ATP. Residue 19–24 (TCSGKS) coordinates substrate. Interaction with substrate tRNA regions lie at residues 42–45 (DSMQ) and 166–170 (QRVAR).

This sequence belongs to the IPP transferase family. In terms of assembly, monomer. Mg(2+) is required as a cofactor.

It catalyses the reaction adenosine(37) in tRNA + dimethylallyl diphosphate = N(6)-dimethylallyladenosine(37) in tRNA + diphosphate. Functionally, catalyzes the transfer of a dimethylallyl group onto the adenine at position 37 in tRNAs that read codons beginning with uridine, leading to the formation of N6-(dimethylallyl)adenosine (i(6)A). This Gluconacetobacter diazotrophicus (strain ATCC 49037 / DSM 5601 / CCUG 37298 / CIP 103539 / LMG 7603 / PAl5) protein is tRNA dimethylallyltransferase.